The chain runs to 856 residues: Structure-specific endonuclease subunit SLX4 (856 aa).

Over residues 1-19 the composition is skewed to polar residues; that stretch reads MDNAAIASQSNTPPSNGRS. Disordered regions lie at residues 1–24, 38–65, 88–121, 139–202, 296–326, 362–392, 621–640, 668–689, and 715–742; these read MDNAAIASQSNTPPSNGRSSARFV, VIEPSSPFSPPSPSTLLTSLSKSPSHKI, VDSPKRQDKSITGSKAKPASTMRHGQRTASHKMA, KTRK…DNEL, GIQTPTESRPATNDSQSISSKQQRVKVKKPQ, KKMGVTKRTSGTERANAARGKSDTLKNGNGP, SKSSKLEPKPNQRNHKSQGD, RLAKTSVKSQEPKSFSLSNEGP, and DSVGEALPLSPSHSSNGNGTLHHPQDCD. Positions 51–60 are enriched in low complexity; it reads STLLTSLSKS. The segment covering 139-152 has biased composition (basic residues); it reads KTRKKKAATAKRTR. A compositionally biased stretch (polar residues) spans 296–309; sequence GIQTPTESRPATND. Positions 673 to 686 are enriched in polar residues; sequence SVKSQEPKSFSLSN.

It belongs to the SLX4 family. As to quaternary structure, forms a heterodimer with SLX1. Post-translationally, phosphorylated in response to DNA damage.

It is found in the nucleus. In terms of biological role, regulatory subunit of the SLX1-SLX4 structure-specific endonuclease that resolves DNA secondary structures generated during DNA repair and recombination. Has endonuclease activity towards branched DNA substrates, introducing single-strand cuts in duplex DNA close to junctions with ss-DNA. This Blastomyces gilchristii (strain SLH14081) (Blastomyces dermatitidis) protein is Structure-specific endonuclease subunit SLX4.